The chain runs to 184 residues: Shikimate kinase (184 aa).

12-17 is an ATP binding site; that stretch reads GSGKST. Residue S16 participates in Mg(2+) binding. Substrate contacts are provided by D34, R58, and G80. R117 serves as a coordination point for ATP. R136 contacts substrate. R153 serves as a coordination point for ATP. Residues 164 to 184 are disordered; the sequence is SRLDDPTPNTSPSSTASGAAT. Over residues 169–184 the composition is skewed to low complexity; that stretch reads PTPNTSPSSTASGAAT.

Belongs to the shikimate kinase family. In terms of assembly, monomer. It depends on Mg(2+) as a cofactor.

Its subcellular location is the cytoplasm. It catalyses the reaction shikimate + ATP = 3-phosphoshikimate + ADP + H(+). Its pathway is metabolic intermediate biosynthesis; chorismate biosynthesis; chorismate from D-erythrose 4-phosphate and phosphoenolpyruvate: step 5/7. Catalyzes the specific phosphorylation of the 3-hydroxyl group of shikimic acid using ATP as a cosubstrate. In Mycobacterium ulcerans (strain Agy99), this protein is Shikimate kinase.